The chain runs to 102 residues: Large ribosomal subunit protein bL21 (102 aa).

The protein belongs to the bacterial ribosomal protein bL21 family. As to quaternary structure, part of the 50S ribosomal subunit. Contacts protein L20.

This protein binds to 23S rRNA in the presence of protein L20. This chain is Large ribosomal subunit protein bL21, found in Ehrlichia canis (strain Jake).